The chain runs to 210 residues: dTTP/UTP pyrophosphatase (210 aa).

The Proton acceptor role is filled by aspartate 89.

This sequence belongs to the Maf family. YhdE subfamily. The cofactor is a divalent metal cation.

It localises to the cytoplasm. It carries out the reaction dTTP + H2O = dTMP + diphosphate + H(+). It catalyses the reaction UTP + H2O = UMP + diphosphate + H(+). Its function is as follows. Nucleoside triphosphate pyrophosphatase that hydrolyzes dTTP and UTP. May have a dual role in cell division arrest and in preventing the incorporation of modified nucleotides into cellular nucleic acids. The polypeptide is dTTP/UTP pyrophosphatase (Burkholderia orbicola (strain AU 1054)).